The primary structure comprises 574 residues: Protein SIX6OS1 (574 aa).

Residues 259 to 313 (KDEQVSNRSSQNSQLLLPCESQKFVRNMNSSEARVTDKKEESSANQSKFVRSDVR) form a disordered region. The segment covering 264–275 (SNRSSQNSQLLL) has biased composition (low complexity). Phosphothreonine is present on threonine 427. Serine 430 carries the phosphoserine modification. The tract at residues 549 to 574 (QDPSTMTSSSSKDFSSSQNKTQFMFF) is disordered. The span at 552–565 (STMTSSSSKDFSSS) shows a compositional bias: low complexity.

Interacts with SYCE1. Interacts with proteasome subunit PSMA8; to participate in meiosis progression during spermatogenesis. As to expression, most abundantly expressed in testis. Also expressed in retina and skeletal muscle.

Its subcellular location is the chromosome. Meiotic protein that localizes to the central element of the synaptonemal complex and is required for chromosome synapsis during meiotic recombination. Required for the appropriate processing of intermediate recombination nodules before crossover formation. In Mus musculus (Mouse), this protein is Protein SIX6OS1 (Six6os1).